The chain runs to 855 residues: Receptor-like protein kinase THESEUS 1 (855 aa).

Positions 1-22 (MVFTKSLLVLLWFLSCYTTTTS) are cleaved as a signal peptide. At 23 to 415 (SALFNPPDNY…GGSGSKSKKK (393 aa)) the chain is on the extracellular side. 14 N-linked (GlcNAc...) asparagine glycosylation sites follow: N41, N64, N75, N114, N118, N136, N143, N154, N168, N225, N242, N288, N353, and N376. A helical membrane pass occupies residues 416-436 (AVIIGSLVGAVTLILLIAVCC). The Cytoplasmic portion of the chain corresponds to 437 to 855 (YCCLVASRKQ…FSQLVHPRGR (419 aa)). In terms of domain architecture, Protein kinase spans 510–783 (FDESSLLGVG…GDVLWNLEYA (274 aa)). ATP contacts are provided by residues 516-524 (LGVGGFGRV) and K538. D634 (proton acceptor) is an active-site residue. The interval 822–855 (IDRGGVNSGTGTDDDAEDATTSAVFSQLVHPRGR) is disordered.

Belongs to the protein kinase superfamily. Ser/Thr protein kinase family. Autophosphorylated. As to expression, expressed in most vegetative tissues, including leaves, stems and roots, primarily in expanding cells and vascular tissue.

It localises to the cell membrane. In terms of biological role, receptor-like protein kinase required for cell elongation during vegetative growth, mostly in a brassinosteroid-(BR-) independent manner. Mediates the response of growing plant cells to the perturbation of cellulose synthesis and may act as a cell-wall-integrity sensor. Controls ectopic-lignin accumulation in cellulose-deficient mutant backgrounds. The protein is Receptor-like protein kinase THESEUS 1 (THE1) of Arabidopsis thaliana (Mouse-ear cress).